The primary structure comprises 149 residues: Large ribosomal subunit protein uL15 (149 aa).

2 stretches are compositionally biased toward basic residues: residues 1–14 (MPSR…HRGH) and 21–30 (RIGKHRKHPG). Residues 1-39 (MPSRFTKTRKHRGHVSAGKGRIGKHRKHPGGRGMAGGQH) are disordered. 2 short sequence motifs (nuclear localization signal) span residues 7-13 (KTRKHRG) and 24-30 (KHRKHPG). Lysine 96 participates in a covalent cross-link: Glycyl lysine isopeptide (Lys-Gly) (interchain with G-Cter in ubiquitin).

It belongs to the universal ribosomal protein uL15 family. In terms of assembly, component of the large ribosomal subunit (LSU). Mature yeast ribosomes consist of a small (40S) and a large (60S) subunit. The 40S small subunit contains 1 molecule of ribosomal RNA (18S rRNA) and 33 different proteins (encoded by 57 genes). The large 60S subunit contains 3 rRNA molecules (25S, 5.8S and 5S rRNA) and 46 different proteins (encoded by 81 genes).

It localises to the cytoplasm. Functionally, component of the ribosome, a large ribonucleoprotein complex responsible for the synthesis of proteins in the cell. The small ribosomal subunit (SSU) binds messenger RNAs (mRNAs) and translates the encoded message by selecting cognate aminoacyl-transfer RNA (tRNA) molecules. The large subunit (LSU) contains the ribosomal catalytic site termed the peptidyl transferase center (PTC), which catalyzes the formation of peptide bonds, thereby polymerizing the amino acids delivered by tRNAs into a polypeptide chain. The nascent polypeptides leave the ribosome through a tunnel in the LSU and interact with protein factors that function in enzymatic processing, targeting, and the membrane insertion of nascent chains at the exit of the ribosomal tunnel. This chain is Large ribosomal subunit protein uL15, found in Saccharomyces cerevisiae (strain ATCC 204508 / S288c) (Baker's yeast).